We begin with the raw amino-acid sequence, 210 residues long: MELSVLQYTGKDTGRKVVLSDTIFGITPNDHAIYLDVKNILANKRQGTHKSKERGEIAGSTKKIKKQKGTGTARAGSIKSPIFRGGGRVFGPKPRDYGFKLNKKLKKLARKSALTYKAQQGNISVLEDFSFEMPKTKMYLEMLQNLNMADQKTLLILPAVDKNLVLASRNLPNTSVALVEQINTYDLLYSKKILISETALSKLTENFNNA.

The segment at 46–77 is disordered; the sequence is QGTHKSKERGEIAGSTKKIKKQKGTGTARAGS.

Belongs to the universal ribosomal protein uL4 family. Part of the 50S ribosomal subunit.

Its function is as follows. One of the primary rRNA binding proteins, this protein initially binds near the 5'-end of the 23S rRNA. It is important during the early stages of 50S assembly. It makes multiple contacts with different domains of the 23S rRNA in the assembled 50S subunit and ribosome. In terms of biological role, forms part of the polypeptide exit tunnel. This is Large ribosomal subunit protein uL4 from Amoebophilus asiaticus (strain 5a2).